Here is a 156-residue protein sequence, read N- to C-terminus: Transcription factor E (156 aa).

Residues methionine 1–glutamate 72 enclose the HTH TFE/IIEalpha-type domain.

Belongs to the TFE family. In terms of assembly, monomer. Interaction with RNA polymerase subunits RpoF and RpoE is necessary for Tfe stimulatory transcription activity. Able to interact with Tbp and RNA polymerase in the absence of DNA promoter. Interacts both with the preinitiation and elongation complexes.

Transcription factor that plays a role in the activation of archaeal genes transcribed by RNA polymerase. Facilitates transcription initiation by enhancing TATA-box recognition by TATA-box-binding protein (Tbp), and transcription factor B (Tfb) and RNA polymerase recruitment. Not absolutely required for transcription in vitro, but particularly important in cases where Tbp or Tfb function is not optimal. It dynamically alters the nucleic acid-binding properties of RNA polymerases by stabilizing the initiation complex and destabilizing elongation complexes. Seems to translocate with the RNA polymerase following initiation and acts by binding to the non template strand of the transcription bubble in elongation complexes. The polypeptide is Transcription factor E (Staphylothermus marinus (strain ATCC 43588 / DSM 3639 / JCM 9404 / F1)).